A 557-amino-acid polypeptide reads, in one-letter code: Urocanate hydratase (557 aa).

Residues 52–53 (GG), Gln130, 176–178 (GMG), Glu196, Arg201, 242–243 (NA), 263–267 (QTSAH), 273–274 (YL), and Tyr322 each bind NAD(+). Cys410 is a catalytic residue. Residue Gly492 coordinates NAD(+).

The protein belongs to the urocanase family. Requires NAD(+) as cofactor.

The protein resides in the cytoplasm. It carries out the reaction 4-imidazolone-5-propanoate = trans-urocanate + H2O. It functions in the pathway amino-acid degradation; L-histidine degradation into L-glutamate; N-formimidoyl-L-glutamate from L-histidine: step 2/3. Catalyzes the conversion of urocanate to 4-imidazolone-5-propionate. The sequence is that of Urocanate hydratase from Pseudoalteromonas translucida (strain TAC 125).